The sequence spans 923 residues: RNA polymerase-associated protein RapA (923 aa).

Residues 162–332 form the Helicase ATP-binding domain; it reads EVGNRVNPRV…FARLRLLDPE (171 aa). 175-182 contacts ATP; it reads DEVGLGKT. Positions 278–281 match the DEAH box motif; sequence DEAH. The region spanning 443–597 is the Helicase C-terminal domain; sequence KIDWLIDFLK…TCPMGMALFS (155 aa).

It belongs to the SNF2/RAD54 helicase family. RapA subfamily. As to quaternary structure, interacts with the RNAP. Has a higher affinity for the core RNAP than for the holoenzyme. Its ATPase activity is stimulated by binding to RNAP.

Transcription regulator that activates transcription by stimulating RNA polymerase (RNAP) recycling in case of stress conditions such as supercoiled DNA or high salt concentrations. Probably acts by releasing the RNAP, when it is trapped or immobilized on tightly supercoiled DNA. Does not activate transcription on linear DNA. Probably not involved in DNA repair. The polypeptide is RNA polymerase-associated protein RapA (Haemophilus influenzae (strain PittEE)).